The chain runs to 102 residues: Protein YcgL (102 aa).

In terms of domain architecture, YcgL spans Met14–Leu98.

This is Protein YcgL from Salmonella agona (strain SL483).